The sequence spans 210 residues: Peroxynitrite isomerase (210 aa).

The GXWXGXG motif lies at 21–27; sequence GQWEGQG. His190 lines the heme b pocket.

Belongs to the nitrobindin family. As to quaternary structure, homodimer. It depends on heme b as a cofactor.

It catalyses the reaction peroxynitrite = nitrate. Its pathway is nitrogen metabolism. Its function is as follows. Heme-binding protein able to scavenge peroxynitrite and to protect free L-tyrosine against peroxynitrite-mediated nitration, by acting as a peroxynitrite isomerase that converts peroxynitrite to nitrate. Therefore, this protein likely plays a role in peroxynitrite sensing and in the detoxification of reactive nitrogen and oxygen species (RNS and ROS, respectively). Is able to bind nitric oxide (NO) in vitro, but may act as a sensor of peroxynitrite levels in vivo. This Renibacterium salmoninarum (strain ATCC 33209 / DSM 20767 / JCM 11484 / NBRC 15589 / NCIMB 2235) protein is Peroxynitrite isomerase.